Here is a 144-residue protein sequence, read N- to C-terminus: Protein cornichon homolog 1 (144 aa).

Residues 1–10 lie on the Cytoplasmic side of the membrane; it reads MAFTFAAFCY. A helical transmembrane segment spans residues 11 to 31; the sequence is MLALLLTAALIFFAIWHIIAF. The Lumenal segment spans residues 32–56; the sequence is DELKTDYKNPIDQCNTLNPLVLPEY. A helical membrane pass occupies residues 57 to 77; sequence LIHAFFCVMFLCAAEWLTLGL. Residues 78–122 lie on the Cytoplasmic side of the membrane; it reads NMPLLAYHIWRYMSRPVMSGPGLYDPTTIMNADILAYCQKEGWCK. A helical transmembrane segment spans residues 123-143; sequence LAFYLLAFFYYLYGMIYVLVS. A topological domain (lumenal) is located at residue serine 144.

Belongs to the cornichon family. Interacts with AREG immature precursor and with immature TGFA, i.e. with a prosegment and lacking full N-glycosylation, but not with the fully N-glycosylated form. In the Golgi apparatus, may form a complex with GORASP55 and transmembrane TGFA.

The protein localises to the endoplasmic reticulum membrane. The protein resides in the golgi apparatus membrane. Its function is as follows. Involved in the selective transport and maturation of TGF-alpha family proteins. This Bos taurus (Bovine) protein is Protein cornichon homolog 1 (CNIH1).